Here is a 366-residue protein sequence, read N- to C-terminus: Mitogen-activated protein kinase sakA (366 aa).

The 280-residue stretch at 20–299 (YTDLQPVGMG…AGEALAHEYL (280 aa)) folds into the Protein kinase domain. ATP is bound by residues 26 to 34 (VGMGAFGLV) and lysine 49. Aspartate 141 (proton acceptor) is an active-site residue. A Phosphothreonine modification is found at threonine 171. Positions 171-173 (TGY) match the TXY motif. A Phosphotyrosine modification is found at tyrosine 173.

Belongs to the protein kinase superfamily. Ser/Thr protein kinase family. MAP kinase subfamily. HOG1 sub-subfamily. In terms of assembly, interacts with the AGC kinase ypkA. Interacts with sakA upon osmotic and cell wall stresses. Mg(2+) is required as a cofactor. In terms of processing, dually phosphorylated on Thr-171 and Tyr-173, which activates the enzyme. Environmental stresses such as high temperature, osmotic stress, cold stress or ethanol stress modulate the activation of sakA via phosphorylation.

The protein resides in the cytoplasm. The protein localises to the nucleus. The catalysed reaction is L-seryl-[protein] + ATP = O-phospho-L-seryl-[protein] + ADP + H(+). It carries out the reaction L-threonyl-[protein] + ATP = O-phospho-L-threonyl-[protein] + ADP + H(+). Activated by tyrosine and threonine phosphorylation. Deactivated by protein phosphatase 2C homolog 2 ptcB. Functionally, proline-directed serine/threonine-protein kinase involved in a signal transduction pathway that is activated by changes in the osmolarity of the extracellular environment. Controls osmotic regulation of transcription of target genes. Involved in environmental stress response. With mpkC, plays a redundant or cooperative role in the conidial stress resistance. Also plays a supportive role in osmotic stress adaptation when sakA is deficient. Involved in paradoxical growth, the cell wall integrity (CWI) pathway and biofilm formation. Also collaborates with mpkC to allow ful virulence in a neutropenic murine model ofinvasive pulmonary aspergillosis. MpkC and sakA have both independent and collaborative functions during the transcriptional response to transient osmotic stress and sakA not only seems to modulate pathways involved in nucleotide, fatty acid, nitrogen and organic acid biosynthesis but is also important for the activation of genes involved in mitochondrial and endoplasmic reticulum functions. This chain is Mitogen-activated protein kinase sakA, found in Aspergillus fumigatus (strain ATCC MYA-4609 / CBS 101355 / FGSC A1100 / Af293) (Neosartorya fumigata).